The primary structure comprises 301 residues: uncharacterized protein (301 aa).

Disordered stretches follow at residues Glu56 to Leu126 and Leu149 to Ser173. Residues Val71–Asn82 show a composition bias toward basic and acidic residues. Positions Lys93–Ile102 are enriched in polar residues. Residues Ser161–Ser173 are compositionally biased toward low complexity.

This is an uncharacterized protein from Caenorhabditis elegans.